A 414-amino-acid polypeptide reads, in one-letter code: 2-acylphloroglucinol 4-prenyltransferase (414 aa).

The N-terminal 86 residues, 1-86 (MELSSVSSFS…LKPLSIFSCK (86 aa)), are a transit peptide targeting the chloroplast. 8 helical membrane passes run 153 to 173 (FSWP…GSCF), 201 to 221 (ISVE…FILI), 229 to 249 (LLTS…VPPF), 256 to 276 (ITAF…VYYA), 281 to 301 (LGLA…ITFM), 336 to 356 (LLGT…AIIW), 359 to 379 (AFKS…LFFQ), and 394 to 414 (KSFY…YLFI).

This sequence belongs to the UbiA prenyltransferase family. Component an active demethylxanthohumol (DMX) biosynthetic metabolon in glandular trichomes (lupulin glands) that encompasses a chalcone synthase (CHS) and a membrane-bound prenyltransferase. Interacts with PT2, forming a functional metabolon. Interacts with CHIL2; this interaction promotes catalytic activity. It depends on Mg(2+) as a cofactor. As to expression, expressed in trichomes.

Its subcellular location is the plastid. The protein resides in the chloroplast membrane. It catalyses the reaction 2',4,4',6'-tetrahydroxychalcone + dimethylallyl diphosphate = desmethylxanthohumol + diphosphate. It carries out the reaction a 2-acylphloroglucinol + dimethylallyl diphosphate = a 2-acyl-4-prenylphloroglucinol + diphosphate. It functions in the pathway secondary metabolite biosynthesis. With respect to regulation, stimulated by CHIL2 but inhibited by CHIL1. Functionally, involved in the biosynthesis of prenylated phenolics natural products which contribute to the bitter taste of beer and display broad biological activities. Catalyzes the first prenylation step in the beta-bitter acid pathway. Uses dimethylallyl diphosphate (DMAPP) as the prenyl donor. The polypeptide is 2-acylphloroglucinol 4-prenyltransferase (Humulus lupulus (European hop)).